Here is a 252-residue protein sequence, read N- to C-terminus: Oncostatin-M (252 aa).

The N-terminal stretch at 1 to 25 (MGVLLTQRTLLSLVLALLFPSMASM) is a signal peptide. Disulfide bonds link C31–C152 and C74–C192. An N-linked (GlcNAc...) asparagine glycan is attached at N100. Disordered stretches follow at residues 162–184 (TAEP…ASDA) and 213–252 (GESP…QLPR). N217 carries N-linked (GlcNAc...) asparagine glycosylation. Basic residues predominate over residues 218-245 (RSRRHSPHQALRKGVRRTRPSRKGKRLM). Residues 222-252 (HSPHQALRKGVRRTRPSRKGKRLMTRGQLPR) constitute a propeptide that is removed on maturation.

This sequence belongs to the LIF/OSM family. Post-translationally, propeptide processing is not important for receptor binding activity but may be important growth-inhibitory activity.

It is found in the secreted. Functionally, growth regulator. Inhibits the proliferation of a number of tumor cell lines. Stimulates proliferation of AIDS-KS cells. It regulates cytokine production, including IL-6, G-CSF and GM-CSF from endothelial cells. Uses both type I OSM receptor (heterodimers composed of LIFR and IL6ST) and type II OSM receptor (heterodimers composed of OSMR and IL6ST). Involved in the maturation of fetal hepatocytes, thereby promoting liver development and regeneration. In Homo sapiens (Human), this protein is Oncostatin-M (OSM).